The following is a 481-amino-acid chain: Glutamyl-tRNA(Gln) amidotransferase subunit A (481 aa).

Residues Lys79 and Ser154 each act as charge relay system in the active site. The tract at residues 136-157 (SAFGATKNPRNPEHVPGGSSGG) is disordered. The active-site Acyl-ester intermediate is Ser178.

The protein belongs to the amidase family. GatA subfamily. As to quaternary structure, heterotrimer of A, B and C subunits.

It carries out the reaction L-glutamyl-tRNA(Gln) + L-glutamine + ATP + H2O = L-glutaminyl-tRNA(Gln) + L-glutamate + ADP + phosphate + H(+). Functionally, allows the formation of correctly charged Gln-tRNA(Gln) through the transamidation of misacylated Glu-tRNA(Gln) in organisms which lack glutaminyl-tRNA synthetase. The reaction takes place in the presence of glutamine and ATP through an activated gamma-phospho-Glu-tRNA(Gln). This chain is Glutamyl-tRNA(Gln) amidotransferase subunit A, found in Lachnospira eligens (strain ATCC 27750 / DSM 3376 / VPI C15-48 / C15-B4) (Eubacterium eligens).